Here is a 113-residue protein sequence, read N- to C-terminus: Carboxysome shell protein CcmK4 (113 aa).

Residues 5–91 (AIGSLETKGF…PHENVEAVFP (87 aa)) enclose the BMC domain.

It belongs to the bacterial microcompartments protein family. CcmK subfamily. As to quaternary structure, homohexamer. Interacts stably with CcmK3, probably forms heterohexamers with a 1:2 CcmK3:CcmK4 stoichiometry.

It is found in the carboxysome. Functionally, one of the shell proteins of the carboxysome, a polyhedral inclusion where RuBisCO (ribulose bisphosphate carboxylase, rbcL-rbcS) is sequestered. Assembles into hexamers which make sheets that form the facets of the polyhedral carboxysome. The hexamer central pore probably regulates metabolite flux. In terms of biological role, a minor shell protein of the carboxysome, a polyhedral inclusion where RuBisCO (ribulose bisphosphate carboxylase, rbcL-rbcS) is sequestered. Hexamers form sheets that form the facets of the polyhedral carboxysome. The shell is 4.5 nm thick, as observed for CcmK proteins. In PCC 7942 there are several CcmK paralogs with presumably functional differences; replacing the central pore residues (34-37) with those of CcmK2 from this organism (Tyr-Glu-Lys-Ile) allows the bacterium to make carboxysomes, but the expression level is too low to know if the carboxysome is functional for CO(2) fixation. This subunit probably makes both homohexamers and heterohexamers with CcmK3. The CcmK3-CcmK4 heterohexmers have been suggested to cap other hexamers, perhaps to alter metabolite flux. The sequence is that of Carboxysome shell protein CcmK4 from Synechococcus elongatus (strain ATCC 33912 / PCC 7942 / FACHB-805) (Anacystis nidulans R2).